Here is a 142-residue protein sequence, read N- to C-terminus: Large ribosomal subunit protein uL11 (142 aa).

This sequence belongs to the universal ribosomal protein uL11 family. Part of the ribosomal stalk of the 50S ribosomal subunit. Interacts with L10 and the large rRNA to form the base of the stalk. L10 forms an elongated spine to which L12 dimers bind in a sequential fashion forming a multimeric L10(L12)X complex. Post-translationally, one or more lysine residues are methylated.

Functionally, forms part of the ribosomal stalk which helps the ribosome interact with GTP-bound translation factors. This chain is Large ribosomal subunit protein uL11, found in Dictyoglomus turgidum (strain DSM 6724 / Z-1310).